We begin with the raw amino-acid sequence, 396 residues long: S-adenosylmethionine synthase 2 (396 aa).

Residue Glu13 coordinates Mg(2+). His19 is a binding site for ATP. Glu47 is a binding site for K(+). The L-methionine site is built by Glu60 and Gln103. ATP-binding positions include 171-173 (DGK), 239-242 (SGRF), Asp250, 256-257 (RK), Ala273, Lys277, and Lys281. Asp250 contributes to the L-methionine binding site. Lys281 contacts L-methionine.

It belongs to the AdoMet synthase family. As to quaternary structure, homotetramer. Mn(2+) is required as a cofactor. It depends on Mg(2+) as a cofactor. Co(2+) serves as cofactor. Requires K(+) as cofactor.

Its subcellular location is the cytoplasm. The catalysed reaction is L-methionine + ATP + H2O = S-adenosyl-L-methionine + phosphate + diphosphate. Its pathway is amino-acid biosynthesis; S-adenosyl-L-methionine biosynthesis; S-adenosyl-L-methionine from L-methionine: step 1/1. Catalyzes the formation of S-adenosylmethionine from methionine and ATP. The reaction comprises two steps that are both catalyzed by the same enzyme: formation of S-adenosylmethionine (AdoMet) and triphosphate, and subsequent hydrolysis of the triphosphate. This Dianthus caryophyllus (Carnation) protein is S-adenosylmethionine synthase 2 (SAM2).